Consider the following 462-residue polypeptide: General transcription factor IIH subunit 4 (462 aa).

The protein belongs to the TFB2 family. As to quaternary structure, component of the 7-subunit TFIIH core complex composed of XPB/ERCC3, XPD/ERCC2, GTF2H1, GTF2H2, GTF2H3, GTF2H4 and GTF2H5, which is active in NER. The core complex associates with the 3-subunit CDK-activating kinase (CAK) module composed of CCNH/cyclin H, CDK7 and MNAT1 to form the 10-subunit holoenzyme (holo-TFIIH) active in transcription. Part of TBP-based Pol II pre-initiation complex (PIC), in which Pol II core assembles with general transcription factors and other specific initiation factors including GTF2E1, GTF2E2, GTF2F1, GTF2F2, TCEA1, ERCC2, ERCC3, GTF2H2, GTF2H3, GTF2H4, GTF2H5, GTF2A1, GTF2A2, GTF2B and TBP; this large multi-subunit PIC complex mediates DNA unwinding and targets Pol II core to the transcription start site where the first phosphodiester bond forms.

It is found in the nucleus. Functionally, component of the general transcription and DNA repair factor IIH (TFIIH) core complex, which is involved in general and transcription-coupled nucleotide excision repair (NER) of damaged DNA and, when complexed to CAK, in RNA transcription by RNA polymerase II. In NER, TFIIH acts by opening DNA around the lesion to allow the excision of the damaged oligonucleotide and its replacement by a new DNA fragment. In transcription, TFIIH has an essential role in transcription initiation. When the pre-initiation complex (PIC) has been established, TFIIH is required for promoter opening and promoter escape. Phosphorylation of the C-terminal tail (CTD) of the largest subunit of RNA polymerase II by the kinase module CAK controls the initiation of transcription. In terms of biological role, stimulates the ATPase activity of TFIIH subunit XPB/ERCC3. This is General transcription factor IIH subunit 4 (GTF2H4) from Homo sapiens (Human).